We begin with the raw amino-acid sequence, 247 residues long: tRNA pseudouridine synthase A (247 aa).

The active-site Nucleophile is Asp52. Residue Tyr113 coordinates substrate.

It belongs to the tRNA pseudouridine synthase TruA family. Homodimer.

The catalysed reaction is uridine(38/39/40) in tRNA = pseudouridine(38/39/40) in tRNA. Formation of pseudouridine at positions 38, 39 and 40 in the anticodon stem and loop of transfer RNAs. The sequence is that of tRNA pseudouridine synthase A from Bartonella henselae (strain ATCC 49882 / DSM 28221 / CCUG 30454 / Houston 1) (Rochalimaea henselae).